Consider the following 289-residue polypeptide: Thioredoxin-like protein 1 (289 aa).

Positions 2 to 109 (VGVKPVGSDP…EEKIKQHLEN (108 aa)) constitute a Thioredoxin domain. A disulfide bond links cysteine 34 and cysteine 37. Serine 113 is subject to Phosphoserine. In terms of domain architecture, PITH spans 115-285 (EDTDIPKGYM…NDFKRVVGKK (171 aa)).

As to quaternary structure, component of the 19S regulatory cap of the 26S proteasome. Interacts with PSMD14/RPN11. Interacts with, and reduces EEF1A1.

The protein resides in the cytoplasm. The protein localises to the nucleus. Its function is as follows. Active thioredoxin with a redox potential of about -250 mV. The protein is Thioredoxin-like protein 1 (Txnl1) of Rattus norvegicus (Rat).